The primary structure comprises 696 residues: Glutamate-rich protein 6B (696 aa).

Positions 1–10 (MSAENNQLSG) are enriched in polar residues. The segment at 1-105 (MSAENNQLSG…EYLEKAGYLE (105 aa)) is disordered. Acidic residues-rich tracts occupy residues 32–44 (EDTE…ESLQ) and 54–72 (ESLE…EEEE). Basic and acidic residues predominate over residues 73-91 (YLGKEEYLKEEEYLGKEEH).

Belongs to the ERICH6 family.

This Homo sapiens (Human) protein is Glutamate-rich protein 6B (ERICH6B).